Consider the following 295-residue polypeptide: Protoheme IX farnesyltransferase 2 (295 aa).

Helical transmembrane passes span 9 to 29 (ITKP…FFLA), 36 to 56 (LAIF…GCVF), 85 to 105 (VALV…YYVA), 108 to 128 (LAAL…SLYL), 135 to 155 (GTLV…VAVS), 163 to 183 (LTLL…IAIF), 209 to 229 (ILLY…SGYA), 230 to 250 (GMSY…MAWT), and 263 to 283 (KLFV…SVDF).

It belongs to the UbiA prenyltransferase family. Protoheme IX farnesyltransferase subfamily.

It localises to the cell inner membrane. It carries out the reaction heme b + (2E,6E)-farnesyl diphosphate + H2O = Fe(II)-heme o + diphosphate. It participates in porphyrin-containing compound metabolism; heme O biosynthesis; heme O from protoheme: step 1/1. Converts heme B (protoheme IX) to heme O by substitution of the vinyl group on carbon 2 of heme B porphyrin ring with a hydroxyethyl farnesyl side group. In Pseudomonas fluorescens (strain ATCC BAA-477 / NRRL B-23932 / Pf-5), this protein is Protoheme IX farnesyltransferase 2.